The sequence spans 314 residues: Electron transfer flavoprotein subunit alpha (314 aa).

An FAD-binding site is contributed by 253-281 (LYVAVGISGAIQHLAGMKDSKVIVAINKD).

The protein belongs to the ETF alpha-subunit/FixB family. In terms of assembly, heterodimer of an alpha and a beta subunit. The cofactor is FAD.

The electron transfer flavoprotein serves as a specific electron acceptor for other dehydrogenases. It transfers the electrons to the main respiratory chain via ETF-ubiquinone oxidoreductase (ETF dehydrogenase). The chain is Electron transfer flavoprotein subunit alpha (etfA) from Bradyrhizobium diazoefficiens (strain JCM 10833 / BCRC 13528 / IAM 13628 / NBRC 14792 / USDA 110).